The sequence spans 350 residues: Outer membrane porin PhoE (350 aa).

The signal sequence occupies residues 1–21 (MKKSTLALVVMGVVASASVHA).

Belongs to the Gram-negative porin family. Homotrimer.

Its subcellular location is the cell outer membrane. Functionally, uptake of inorganic phosphate, phosphorylated compounds, and some other negatively charged solutes. The chain is Outer membrane porin PhoE (phoE) from Enterobacter cloacae.